We begin with the raw amino-acid sequence, 119 residues long: Flagellar transcriptional regulator FlhD (119 aa).

Belongs to the FlhD family. In terms of assembly, homodimer; disulfide-linked. Forms a heterohexamer composed of two FlhC and four FlhD subunits. Each FlhC binds a FlhD dimer, forming a heterotrimer, and a hexamer assembles by dimerization of two heterotrimers.

It is found in the cytoplasm. In terms of biological role, functions in complex with FlhC as a master transcriptional regulator that regulates transcription of several flagellar and non-flagellar operons by binding to their promoter region. Activates expression of class 2 flagellar genes, including fliA, which is a flagellum-specific sigma factor that turns on the class 3 genes. Also regulates genes whose products function in a variety of physiological pathways. The polypeptide is Flagellar transcriptional regulator FlhD (Shigella boydii serotype 4 (strain Sb227)).